The following is a 236-amino-acid chain: Ribosome assembly factor MRT4 (236 aa).

This sequence belongs to the universal ribosomal protein uL10 family. Associates with the pre-60S ribosomal particle.

The protein resides in the nucleus. It localises to the nucleolus. It is found in the cytoplasm. Functionally, component of the ribosome assembly machinery. Nuclear paralog of the ribosomal protein P0, it binds pre-60S subunits at an early stage of assembly in the nucleolus, and is replaced by P0 in cytoplasmic pre-60S subunits and mature 80S ribosomes. The protein is Ribosome assembly factor MRT4 of Saccharomyces cerevisiae (strain ATCC 204508 / S288c) (Baker's yeast).